The following is a 274-amino-acid chain: 3-methyl-2-oxobutanoate hydroxymethyltransferase (274 aa).

2 residues coordinate Mg(2+): aspartate 49 and aspartate 88. 3-methyl-2-oxobutanoate-binding positions include 49–50, aspartate 88, and lysine 118; that span reads DS. Residue glutamate 120 coordinates Mg(2+). Glutamate 187 functions as the Proton acceptor in the catalytic mechanism.

The protein belongs to the PanB family. As to quaternary structure, homodecamer; pentamer of dimers. The cofactor is Mg(2+).

It localises to the cytoplasm. It carries out the reaction 3-methyl-2-oxobutanoate + (6R)-5,10-methylene-5,6,7,8-tetrahydrofolate + H2O = 2-dehydropantoate + (6S)-5,6,7,8-tetrahydrofolate. Its pathway is cofactor biosynthesis; (R)-pantothenate biosynthesis; (R)-pantoate from 3-methyl-2-oxobutanoate: step 1/2. In terms of biological role, catalyzes the reversible reaction in which hydroxymethyl group from 5,10-methylenetetrahydrofolate is transferred onto alpha-ketoisovalerate to form ketopantoate. The polypeptide is 3-methyl-2-oxobutanoate hydroxymethyltransferase (Nitrobacter winogradskyi (strain ATCC 25391 / DSM 10237 / CIP 104748 / NCIMB 11846 / Nb-255)).